A 426-amino-acid chain; its full sequence is Glutamyl-tRNA reductase (426 aa).

Residues 50–53, serine 108, 113–115, and glutamine 119 contribute to the substrate site; these read TCNR and EPQ. The active-site Nucleophile is cysteine 51. 188–193 contributes to the NADP(+) binding site; that stretch reads GAGEMI.

This sequence belongs to the glutamyl-tRNA reductase family. Homodimer.

It carries out the reaction (S)-4-amino-5-oxopentanoate + tRNA(Glu) + NADP(+) = L-glutamyl-tRNA(Glu) + NADPH + H(+). Its pathway is porphyrin-containing compound metabolism; protoporphyrin-IX biosynthesis; 5-aminolevulinate from L-glutamyl-tRNA(Glu): step 1/2. Its function is as follows. Catalyzes the NADPH-dependent reduction of glutamyl-tRNA(Glu) to glutamate 1-semialdehyde (GSA). This Polaromonas sp. (strain JS666 / ATCC BAA-500) protein is Glutamyl-tRNA reductase.